The chain runs to 408 residues: Intracellular coagulation inhibitor 2 (408 aa).

A signal peptide spans 1–22 (MLSRRTLDCCLVMLIVSTTFCQ). An intrachain disulfide couples Cys50 to Cys249. A glycan (N-linked (GlcNAc...) asparagine) is linked at Asn174.

The protein belongs to the serpin family. In terms of assembly, monomer. Forms a covalent heterodimer with clotting factor C chain B. Forms a covalent heterodimer with proclotting enzyme heavy chain. Specifically expressed in hemocytes (at protein level).

The protein localises to the secreted. Serine protease inhibitor that inhibits proclotting enzyme and to a lesser extent clotting factor C and clotting factor G. This chain is Intracellular coagulation inhibitor 2, found in Tachypleus tridentatus (Japanese horseshoe crab).